The primary structure comprises 311 residues: Methionyl-tRNA formyltransferase (311 aa).

Position 112–115 (112–115 (SLLP)) interacts with (6S)-5,6,7,8-tetrahydrofolate.

This sequence belongs to the Fmt family.

The catalysed reaction is L-methionyl-tRNA(fMet) + (6R)-10-formyltetrahydrofolate = N-formyl-L-methionyl-tRNA(fMet) + (6S)-5,6,7,8-tetrahydrofolate + H(+). Functionally, attaches a formyl group to the free amino group of methionyl-tRNA(fMet). The formyl group appears to play a dual role in the initiator identity of N-formylmethionyl-tRNA by promoting its recognition by IF2 and preventing the misappropriation of this tRNA by the elongation apparatus. In Bradyrhizobium diazoefficiens (strain JCM 10833 / BCRC 13528 / IAM 13628 / NBRC 14792 / USDA 110), this protein is Methionyl-tRNA formyltransferase.